Reading from the N-terminus, the 326-residue chain is Beta-ketoacyl-[acyl-carrier-protein] synthase III (326 aa).

Catalysis depends on residues cysteine 120 and histidine 253. Residues 254–258 form an ACP-binding region; the sequence is QANIR. Residue asparagine 283 is part of the active site.

Belongs to the thiolase-like superfamily. FabH family. As to quaternary structure, homodimer.

Its subcellular location is the cytoplasm. It carries out the reaction malonyl-[ACP] + acetyl-CoA + H(+) = 3-oxobutanoyl-[ACP] + CO2 + CoA. Its pathway is lipid metabolism; fatty acid biosynthesis. Functionally, catalyzes the condensation reaction of fatty acid synthesis by the addition to an acyl acceptor of two carbons from malonyl-ACP. Catalyzes the first condensation reaction which initiates fatty acid synthesis and may therefore play a role in governing the total rate of fatty acid production. Possesses both acetoacetyl-ACP synthase and acetyl transacylase activities. Its substrate specificity determines the biosynthesis of branched-chain and/or straight-chain of fatty acids. The chain is Beta-ketoacyl-[acyl-carrier-protein] synthase III from Ralstonia pickettii (strain 12J).